The primary structure comprises 263 residues: Glutamate/glutamine/aspartate/asparagine transport ATP-binding protein BztD (263 aa).

The ABC transporter domain maps to 23–257 (IQISQMNKWY…PQSERTKQFL (235 aa)). Residue 55-62 (GPSGSGKS) participates in ATP binding.

It belongs to the ABC transporter superfamily. In terms of assembly, bztB and BztC form a heterodimer which can form a membrane complex with a homodimer of BztD.

It localises to the cell membrane. Its function is as follows. Part of a binding-protein-dependent transport system for glutamate, glutamine, aspartate, asparagine. Probably responsible for energy coupling to the transport system. The protein is Glutamate/glutamine/aspartate/asparagine transport ATP-binding protein BztD (bztD) of Rhodobacter capsulatus (strain ATCC BAA-309 / NBRC 16581 / SB1003).